The chain runs to 503 residues: Maturase K (503 aa).

The protein belongs to the intron maturase 2 family. MatK subfamily.

Its subcellular location is the plastid. It localises to the chloroplast. Usually encoded in the trnK tRNA gene intron. Probably assists in splicing its own and other chloroplast group II introns. This chain is Maturase K, found in Liquidambar formosana (Formosan gum).